A 113-amino-acid chain; its full sequence is Large ribosomal subunit protein bL19m (113 aa).

The protein belongs to the bacterial ribosomal protein bL19 family.

It is found in the mitochondrion. In Reclinomonas americana, this protein is Large ribosomal subunit protein bL19m (RPL19).